The following is a 420-amino-acid chain: Serine hydroxymethyltransferase (420 aa).

(6S)-5,6,7,8-tetrahydrofolate is bound by residues L121 and 125–127 (GHL). K229 is modified (N6-(pyridoxal phosphate)lysine).

This sequence belongs to the SHMT family. Homodimer. The cofactor is pyridoxal 5'-phosphate.

The protein localises to the cytoplasm. It catalyses the reaction (6R)-5,10-methylene-5,6,7,8-tetrahydrofolate + glycine + H2O = (6S)-5,6,7,8-tetrahydrofolate + L-serine. Its pathway is one-carbon metabolism; tetrahydrofolate interconversion. The protein operates within amino-acid biosynthesis; glycine biosynthesis; glycine from L-serine: step 1/1. Catalyzes the reversible interconversion of serine and glycine with tetrahydrofolate (THF) serving as the one-carbon carrier. This reaction serves as the major source of one-carbon groups required for the biosynthesis of purines, thymidylate, methionine, and other important biomolecules. Also exhibits THF-independent aldolase activity toward beta-hydroxyamino acids, producing glycine and aldehydes, via a retro-aldol mechanism. The chain is Serine hydroxymethyltransferase from Streptomyces coelicolor (strain ATCC BAA-471 / A3(2) / M145).